Here is a 202-residue protein sequence, read N- to C-terminus: Protein TIFY 11g (202 aa).

Positions 1–11 (MDAVGAAGGGA) are enriched in gly residues. The interval 1–31 (MDAVGAAGGGAMLPAAARRGQPPQPPCMTTA) is disordered. Over residues 12-21 (MLPAAARRGQ) the composition is skewed to low complexity. The Tify domain occupies 101 to 136 (ATAPTAPLTIVYGGQVLVFEHYTAEAAEKLVQRTQH). Positions 185-200 (PIARKASLQRFLQKRK) match the Jas motif. A Nuclear localization signal motif is present at residues 187 to 194 (ARKASLQR).

It belongs to the TIFY/JAZ family. Post-translationally, ubiquitinated. Targeted for degradation by the SCF(COI1) E3 ubiquitin ligase-proteasome pathway during jasmonate signaling.

The protein localises to the nucleus. Its function is as follows. Repressor of jasmonate responses. This is Protein TIFY 11g from Oryza sativa subsp. japonica (Rice).